Consider the following 181-residue polypeptide: Translationally-controlled tumor protein homolog (181 aa).

Residues 1–181 (MLIYKDIFTD…VKEAILEEKC (181 aa)) form the TCTP domain.

This sequence belongs to the TCTP family.

Its subcellular location is the cytoplasm. Involved in calcium binding and microtubule stabilization. The polypeptide is Translationally-controlled tumor protein homolog (tct-1) (Caenorhabditis briggsae).